Here is a 240-residue protein sequence, read N- to C-terminus: MNKNVVIKSLAALTILTSVTGIGITLVEEVQQTAKAENNVTKVKDTNIFPYTGVVAFKSATGFVVGKNTILTNKHVSKNYKVGDRITAHPNSDKGNGGIYSIKKIINYPGKEDVSVIQVEERAIERGPKGFNFNDNVTPFKYAAGAKAGERIKVIGYPHPYKNKYVLYESTGPVMSVEGSSIVYSAHTESGNSGSPVLNSNNELVGIHFASDVKNDDNRNAYGVYFTPEIKKFIAENIDK.

Residues 1-36 (MNKNVVIKSLAALTILTSVTGIGITLVEEVQQTAKA) form the signal peptide. Active-site charge relay system residues include His75, Asp113, and Ser193.

It belongs to the peptidase S1B family.

The protein resides in the secreted. Its function is as follows. Serine protease that cleaves specifically after the sequence Trp-Glu-Leu-Gln. The chain is Serine protease SplB (splB) from Staphylococcus aureus (strain MW2).